The chain runs to 136 residues: Urease subunit beta (136 aa).

Belongs to the urease beta subunit family. As to quaternary structure, heterotrimer of UreA (gamma), UreB (beta) and UreC (alpha) subunits. Three heterotrimers associate to form the active enzyme.

The protein localises to the cytoplasm. The enzyme catalyses urea + 2 H2O + H(+) = hydrogencarbonate + 2 NH4(+). Its pathway is nitrogen metabolism; urea degradation; CO(2) and NH(3) from urea (urease route): step 1/1. This is Urease subunit beta from Staphylococcus aureus (strain Mu3 / ATCC 700698).